Here is a 217-residue protein sequence, read N- to C-terminus: Lipid transferase CIDEA (217 aa).

One can recognise a CIDE-N domain in the interval 33–110 (PARPFRVSNH…ILEKGQKWTP (78 aa)). Residues 163 to 180 (CTSFKAVLRNLLRFMSYA) form an amphipathic helix region.

The protein belongs to the CIDE family. Homodimer. Interacts with CIDEC. Directly interacts with CEBPB. Interacts with isoform CLSTN3beta of CLSTN3; inhibiting the lipid transferase activity of CIDEA. As to expression, highly expressed in brown adipose tissue and, at lower levels, in white adipose tissue (at protein level). Undetectable in undifferentiated preadipocytes. Expressed in mammary gland during pregnancy and lactation, in epithelial cells, but not in the surrounding adipose tissue. Secreted into milk via milk fat globules.

The protein resides in the lipid droplet. The protein localises to the nucleus. It carries out the reaction a triacyl-sn-glycerol(in) = a triacyl-sn-glycerol(out). Its function is as follows. Lipid transferase that promotes unilocular lipid droplet formation by mediating lipid droplet fusion. Lipid droplet fusion promotes their enlargement, restricting lipolysis and favoring lipid storage. Localizes on the lipid droplet surface, at focal contact sites between lipid droplets, and mediates atypical lipid droplet fusion by promoting directional net neutral lipid transfer from the smaller to larger lipid droplets. The transfer direction may be driven by the internal pressure difference between the contacting lipid droplet pair and occurs at a lower rate than that promoted by CIDEC. May also act as a CEBPB coactivator in epithelial cells to control the expression of a subset of CEBPB downstream target genes, including ID2, IGF1, PRLR, SOCS1, SOCS3, XDH, but not casein. By interacting with CEBPB, strengthens the association of CEBPB with the XDH promoter, increases histone acetylation and dissociates HDAC1 from the promoter. When overexpressed, induces apoptosis; the physiological significance of its role in apoptosis is unclear. The polypeptide is Lipid transferase CIDEA (Mus musculus (Mouse)).